Here is a 403-residue protein sequence, read N- to C-terminus: RNA-binding motif, single-stranded-interacting protein 1 (403 aa).

Residues 30 to 56 (PAHPMAPPSPSTTSSNNNSSSSSNSGW) form a disordered region. Low complexity predominate over residues 40 to 54 (STTSSNNNSSSSSNS). RRM domains are found at residues 62-135 (TNLY…MAKQ) and 141-226 (TNLY…FADG). Position 208 is a phosphothreonine (Thr208).

The protein localises to the nucleus. Single-stranded DNA binding protein that interacts with the region upstream of the C-myc gene. Binds specifically to the DNA sequence motif 5'-[AT]CT[AT][AT]T-3'. Probably has a role in DNA replication. The sequence is that of RNA-binding motif, single-stranded-interacting protein 1 (RBMS1) from Bos taurus (Bovine).